Consider the following 166-residue polypeptide: Crossover junction endodeoxyribonuclease RuvC (166 aa).

Active-site residues include aspartate 9, glutamate 70, and aspartate 144. Mg(2+)-binding residues include aspartate 9, glutamate 70, and aspartate 144.

It belongs to the RuvC family. As to quaternary structure, homodimer which binds Holliday junction (HJ) DNA. The HJ becomes 2-fold symmetrical on binding to RuvC with unstacked arms; it has a different conformation from HJ DNA in complex with RuvA. In the full resolvosome a probable DNA-RuvA(4)-RuvB(12)-RuvC(2) complex forms which resolves the HJ. The cofactor is Mg(2+).

It localises to the cytoplasm. It catalyses the reaction Endonucleolytic cleavage at a junction such as a reciprocal single-stranded crossover between two homologous DNA duplexes (Holliday junction).. The RuvA-RuvB-RuvC complex processes Holliday junction (HJ) DNA during genetic recombination and DNA repair. Endonuclease that resolves HJ intermediates. Cleaves cruciform DNA by making single-stranded nicks across the HJ at symmetrical positions within the homologous arms, yielding a 5'-phosphate and a 3'-hydroxyl group; requires a central core of homology in the junction. The consensus cleavage sequence is 5'-(A/T)TT(C/G)-3'. Cleavage occurs on the 3'-side of the TT dinucleotide at the point of strand exchange. HJ branch migration catalyzed by RuvA-RuvB allows RuvC to scan DNA until it finds its consensus sequence, where it cleaves and resolves the cruciform DNA. This is Crossover junction endodeoxyribonuclease RuvC from Neorickettsia sennetsu (strain ATCC VR-367 / Miyayama) (Ehrlichia sennetsu).